A 145-amino-acid polypeptide reads, in one-letter code: Ribosome maturation factor RimP (145 aa).

Belongs to the RimP family.

It localises to the cytoplasm. In terms of biological role, required for maturation of 30S ribosomal subunits. This Borreliella burgdorferi (strain ATCC 35210 / DSM 4680 / CIP 102532 / B31) (Borrelia burgdorferi) protein is Ribosome maturation factor RimP.